A 209-amino-acid polypeptide reads, in one-letter code: Ribosomal RNA small subunit methyltransferase G (209 aa).

S-adenosyl-L-methionine contacts are provided by residues Gly-77, Met-82, 128-129 (VE), and Arg-143.

It belongs to the methyltransferase superfamily. RNA methyltransferase RsmG family.

The protein resides in the cytoplasm. It carries out the reaction guanosine(527) in 16S rRNA + S-adenosyl-L-methionine = N(7)-methylguanosine(527) in 16S rRNA + S-adenosyl-L-homocysteine. Its function is as follows. Specifically methylates the N7 position of guanine in position 527 of 16S rRNA. The polypeptide is Ribosomal RNA small subunit methyltransferase G (Chromobacterium violaceum (strain ATCC 12472 / DSM 30191 / JCM 1249 / CCUG 213 / NBRC 12614 / NCIMB 9131 / NCTC 9757 / MK)).